Consider the following 560-residue polypeptide: Diphtheria toxin homolog CRM228 (560 aa).

An N-terminal signal peptide occupies residues 1-25 (MSRKLFASILIGALLGIGAPPSAHA). NAD(+) contacts are provided by H46 and Y90. The active site involves E173. Cystine bridges form between C211-C226 and C486-C496.

In Corynebacterium diphtheriae, this protein is Diphtheria toxin homolog CRM228.